The following is a 162-amino-acid chain: MAQVKSSSKSDPNYKVVAENRRARFDYAIESDVECGIILEGSEVKSLREGGANIAESYAAVEDGELWLVNSYIAPYKQAKTFQHEERRRRKLLISRKQLSDFWNATQRKGMTLVPLVLYFNHRGMAKIKIGVAKGKKLHDKRETAAKRDWSRQKSRLMKDHG.

Residues 140–162 (DKRETAAKRDWSRQKSRLMKDHG) are disordered.

It belongs to the SmpB family.

It localises to the cytoplasm. Functionally, required for rescue of stalled ribosomes mediated by trans-translation. Binds to transfer-messenger RNA (tmRNA), required for stable association of tmRNA with ribosomes. tmRNA and SmpB together mimic tRNA shape, replacing the anticodon stem-loop with SmpB. tmRNA is encoded by the ssrA gene; the 2 termini fold to resemble tRNA(Ala) and it encodes a 'tag peptide', a short internal open reading frame. During trans-translation Ala-aminoacylated tmRNA acts like a tRNA, entering the A-site of stalled ribosomes, displacing the stalled mRNA. The ribosome then switches to translate the ORF on the tmRNA; the nascent peptide is terminated with the 'tag peptide' encoded by the tmRNA and targeted for degradation. The ribosome is freed to recommence translation, which seems to be the essential function of trans-translation. This chain is SsrA-binding protein, found in Roseobacter denitrificans (strain ATCC 33942 / OCh 114) (Erythrobacter sp. (strain OCh 114)).